Consider the following 436-residue polypeptide: MAKPVVAIVGRPNVGKSTIFNRIVGERVSIVEDVPGVTRDRIYNSAEWLGKEFNIIDTGGIDLSDEPFLEQIRAQAEIAIDEADVIIFITNGREGVTDADEQVAKILYRSNKPIVLAINKVDNPEMRDQIYDFYSLGFGEPYPISGSHGLGLGDMLDAVRAHFPKEEEEEYPDDTVKFSLIGRPNVGKSSILNALLGEDRVIVSDIAGTTRDAIDTTYTFDGQDYVMIDTAGMRKRGKVYESTEKYSVLRAMRAIERSDVVLVVINAEEGIREQDKRIAGYAHDAGRAIIIVVNKWDAINKDEKTINVWTEDIREQFQFLSYAPIVFVSAKTKQRLNNLFPLINQVSDNHSLRVQSSMLNDVISDAVAMNPSPMDRGKRLKIFYTTQVAVKPPTFVVFVNDPELMHFSYERFLENRIREAFPFDGTPIRVIARKRK.

EngA-type G domains are found at residues 4-167 (PVVA…PKEE) and 176-351 (VKFS…DNHS). Residues 10-17 (GRPNVGKS), 57-61 (DTGGI), 119-122 (NKVD), 182-189 (GRPNVGKS), 229-233 (DTAGM), and 294-297 (NKWD) contribute to the GTP site. In terms of domain architecture, KH-like spans 352-436 (LRVQSSMLND…PIRVIARKRK (85 aa)).

The protein belongs to the TRAFAC class TrmE-Era-EngA-EngB-Septin-like GTPase superfamily. EngA (Der) GTPase family. Associates with the 50S ribosomal subunit.

GTPase that plays an essential role in the late steps of ribosome biogenesis. This Listeria welshimeri serovar 6b (strain ATCC 35897 / DSM 20650 / CCUG 15529 / CIP 8149 / NCTC 11857 / SLCC 5334 / V8) protein is GTPase Der.